The primary structure comprises 1404 residues: DNA-directed RNA polymerase subunit beta' (1404 aa).

Zn(2+) contacts are provided by Cys-70, Cys-72, Cys-85, and Cys-88. Mg(2+)-binding residues include Asp-460, Asp-462, and Asp-464. The Zn(2+) site is built by Cys-814, Cys-888, Cys-895, and Cys-898.

This sequence belongs to the RNA polymerase beta' chain family. As to quaternary structure, the RNAP catalytic core consists of 2 alpha, 1 beta, 1 beta' and 1 omega subunit. When a sigma factor is associated with the core the holoenzyme is formed, which can initiate transcription. Requires Mg(2+) as cofactor. It depends on Zn(2+) as a cofactor.

The enzyme catalyses RNA(n) + a ribonucleoside 5'-triphosphate = RNA(n+1) + diphosphate. In terms of biological role, DNA-dependent RNA polymerase catalyzes the transcription of DNA into RNA using the four ribonucleoside triphosphates as substrates. This Shewanella loihica (strain ATCC BAA-1088 / PV-4) protein is DNA-directed RNA polymerase subunit beta'.